The following is a 692-amino-acid chain: uncharacterized protein (692 aa).

Response regulatory domains are found at residues 9–130 (RVLY…LRMC) and 139–255 (RILI…EYRM). 2 positions are modified to 4-aspartylphosphate: Asp-58 and Asp-188. The GGDEF domain occupies 299 to 432 (GVHGLVIIDV…GGNQAHVWSA (134 aa)). The region spanning 443 to 691 (ESVIKRLVST…SFDFQHMSHD (249 aa)) is the EAL domain.

This is an uncharacterized protein from Thiocystis violacea.